We begin with the raw amino-acid sequence, 234 residues long: Glucosamine-6-phosphate deaminase (234 aa).

Aspartate 63 serves as the catalytic Proton acceptor; for enolization step. The active-site For ring-opening step is asparagine 129. The active-site Proton acceptor; for ring-opening step is the histidine 131. Glutamate 136 (for ring-opening step) is an active-site residue.

Belongs to the glucosamine/galactosamine-6-phosphate isomerase family. NagB subfamily.

It catalyses the reaction alpha-D-glucosamine 6-phosphate + H2O = beta-D-fructose 6-phosphate + NH4(+). The protein operates within amino-sugar metabolism; N-acetylneuraminate degradation; D-fructose 6-phosphate from N-acetylneuraminate: step 5/5. Functionally, catalyzes the reversible isomerization-deamination of glucosamine 6-phosphate (GlcN6P) to form fructose 6-phosphate (Fru6P) and ammonium ion. This is Glucosamine-6-phosphate deaminase from Listeria innocua serovar 6a (strain ATCC BAA-680 / CLIP 11262).